A 159-amino-acid polypeptide reads, in one-letter code: Cytochrome b6-f complex subunit 4 (159 aa).

3 helical membrane-spanning segments follow: residues 36-56 (LLYI…GLAV), 95-115 (LLGV…PFLE), and 131-151 (TVFL…TLPI).

The protein belongs to the cytochrome b family. PetD subfamily. As to quaternary structure, the 4 large subunits of the cytochrome b6-f complex are cytochrome b6, subunit IV (17 kDa polypeptide, petD), cytochrome f and the Rieske protein, while the 4 small subunits are petG, petL, petM and petN. The complex functions as a dimer.

Its subcellular location is the plastid. The protein localises to the chloroplast thylakoid membrane. Functionally, component of the cytochrome b6-f complex, which mediates electron transfer between photosystem II (PSII) and photosystem I (PSI), cyclic electron flow around PSI, and state transitions. This is Cytochrome b6-f complex subunit 4 from Piper cenocladum (Ant piper).